Consider the following 631-residue polypeptide: Pescadillo homolog (631 aa).

The region spanning 321–414 (RLRNLFKGLK…QLLPTNKYFL (94 aa)) is the BRCT domain. Disordered regions lie at residues 450–469 (HAQSDDESDEEEAAQNEDDT) and 489–569 (EYKK…MVKP). Phosphoserine occurs at positions 453 and 457. Composition is skewed to acidic residues over residues 454–469 (DDESDEEEAAQNEDDT) and 499–524 (VNEDEEDTDDDFDGEQESDEEEEELD). A coiled-coil region spans residues 510–541 (FDGEQESDEEEEELDEKTKRLQEEKKKMSVQS). Residues 525-536 (EKTKRLQEEKKK) show a composition bias toward basic and acidic residues. Basic residues predominate over residues 543 to 552 (KVHKVNKRQL). Residues 553-562 (HKAEVDEHRL) are compositionally biased toward basic and acidic residues.

This sequence belongs to the pescadillo family.

The protein resides in the nucleus. It is found in the nucleolus. It localises to the nucleoplasm. Required for maturation of ribosomal RNAs and formation of the large ribosomal subunit. The sequence is that of Pescadillo homolog from Drosophila mojavensis (Fruit fly).